A 681-amino-acid polypeptide reads, in one-letter code: CAI-1 autoinducer sensor kinase/phosphatase CqsS (681 aa).

The next 4 helical transmembrane spans lie at 17-37 (LVGWMGFIGFPIYYIVWEFMF), 73-93 (AYYQVVTTLCLPCFFFYMLLM), 112-132 (ILLVHITSVMFVQTFVGIGLA), and 148-168 (MDWTHVPIFLFIYLFGNLFYF). Residues 187-413 (GIAHEMRNPL…QFTMTFPTIG (227 aa)) form the Histidine kinase domain. H190 carries the post-translational modification Phosphohistidine; by autocatalysis. Positions 564 to 681 (TIMVVDDNES…RLFDKIANWI (118 aa)) constitute a Response regulatory domain. A 4-aspartylphosphate modification is found at D613.

Its subcellular location is the cell membrane. It catalyses the reaction ATP + protein L-histidine = ADP + protein N-phospho-L-histidine.. Functionally, senses the quorum-sensing autoinducer CAI-1 ((S)-3-hydroxytridecan-4-one) which probably functions as an intragenus signal. The sensory signal is then relayed to LuxU and LuxO. The chain is CAI-1 autoinducer sensor kinase/phosphatase CqsS (cqsS) from Vibrio campbellii (strain ATCC BAA-1116).